We begin with the raw amino-acid sequence, 719 residues long: Photosystem I P700 chlorophyll a apoprotein A1 (719 aa).

8 helical membrane-spanning segments follow: residues 59 to 82 (VFSA…FHGA), 145 to 168 (LYCT…FHYH), 184 to 208 (LNHH…HVSL), 280 to 298 (TAHH…GHMY), 335 to 358 (WHAQ…HHMY), 374 to 400 (LSLF…IFMV), 422 to 444 (AIVS…LYIH), and 520 to 538 (FLVH…LILL). Cysteine 562 and cysteine 571 together coordinate [4Fe-4S] cluster. Transmembrane regions (helical) follow at residues 578–599 (HVFL…HFSW) and 653–675 (LSAY…MFLF). Histidine 664 lines the chlorophyll a' pocket. Chlorophyll a-binding residues include methionine 672 and tyrosine 680. Residue tryptophan 681 participates in phylloquinone binding. The helical transmembrane segment at 713-719 (AVGVAHY) threads the bilayer.

The protein belongs to the PsaA/PsaB family. The PsaA/B heterodimer binds the P700 chlorophyll special pair and subsequent electron acceptors. PSI consists of a core antenna complex that captures photons, and an electron transfer chain that converts photonic excitation into a charge separation. The eukaryotic PSI reaction center is composed of at least 11 subunits. It depends on P700 is a chlorophyll a/chlorophyll a' dimer, A0 is one or more chlorophyll a, A1 is one or both phylloquinones and FX is a shared 4Fe-4S iron-sulfur center. as a cofactor.

The protein localises to the plastid. It localises to the chloroplast thylakoid membrane. The catalysed reaction is reduced [plastocyanin] + hnu + oxidized [2Fe-2S]-[ferredoxin] = oxidized [plastocyanin] + reduced [2Fe-2S]-[ferredoxin]. Functionally, psaA and PsaB bind P700, the primary electron donor of photosystem I (PSI), as well as the electron acceptors A0, A1 and FX. PSI is a plastocyanin-ferredoxin oxidoreductase, converting photonic excitation into a charge separation, which transfers an electron from the donor P700 chlorophyll pair to the spectroscopically characterized acceptors A0, A1, FX, FA and FB in turn. Oxidized P700 is reduced on the lumenal side of the thylakoid membrane by plastocyanin. In Encephalartos lebomboensis (Lebombo cycad), this protein is Photosystem I P700 chlorophyll a apoprotein A1.